Reading from the N-terminus, the 369-residue chain is Phenylalanine--tRNA ligase alpha subunit (369 aa).

Glutamate 269 is a Mg(2+) binding site.

The protein belongs to the class-II aminoacyl-tRNA synthetase family. Phe-tRNA synthetase alpha subunit type 1 subfamily. Tetramer of two alpha and two beta subunits. Requires Mg(2+) as cofactor.

The protein resides in the cytoplasm. The catalysed reaction is tRNA(Phe) + L-phenylalanine + ATP = L-phenylalanyl-tRNA(Phe) + AMP + diphosphate + H(+). This Brucella ovis (strain ATCC 25840 / 63/290 / NCTC 10512) protein is Phenylalanine--tRNA ligase alpha subunit.